The primary structure comprises 208 residues: Probable GTP-binding protein EngB (208 aa).

The 175-residue stretch at 29 to 203 folds into the EngB-type G domain; sequence EGREVAFAGR…WDKLGEWLGI (175 aa). GTP contacts are provided by residues 37–44, 64–68, 82–85, 149–152, and 182–184; these read GRSNAGKS, GRTQL, DLPG, TKAD, and FSA. 2 residues coordinate Mg(2+): Ser-44 and Thr-66.

It belongs to the TRAFAC class TrmE-Era-EngA-EngB-Septin-like GTPase superfamily. EngB GTPase family. Requires Mg(2+) as cofactor.

Necessary for normal cell division and for the maintenance of normal septation. The chain is Probable GTP-binding protein EngB from Alcanivorax borkumensis (strain ATCC 700651 / DSM 11573 / NCIMB 13689 / SK2).